A 428-amino-acid polypeptide reads, in one-letter code: 3-phosphoshikimate 1-carboxyvinyltransferase (428 aa).

The 3-phosphoshikimate site is built by lysine 23, serine 24, and arginine 28. A phosphoenolpyruvate-binding site is contributed by lysine 23. Phosphoenolpyruvate contacts are provided by glycine 97 and arginine 125. Serine 170, serine 171, glutamine 172, serine 198, aspartate 314, asparagine 337, and lysine 341 together coordinate 3-phosphoshikimate. Residue glutamine 172 coordinates phosphoenolpyruvate. Aspartate 314 serves as the catalytic Proton acceptor. Phosphoenolpyruvate-binding residues include arginine 345, arginine 387, and lysine 412.

The protein belongs to the EPSP synthase family. As to quaternary structure, monomer.

The protein resides in the cytoplasm. The enzyme catalyses 3-phosphoshikimate + phosphoenolpyruvate = 5-O-(1-carboxyvinyl)-3-phosphoshikimate + phosphate. It participates in metabolic intermediate biosynthesis; chorismate biosynthesis; chorismate from D-erythrose 4-phosphate and phosphoenolpyruvate: step 6/7. In terms of biological role, catalyzes the transfer of the enolpyruvyl moiety of phosphoenolpyruvate (PEP) to the 5-hydroxyl of shikimate-3-phosphate (S3P) to produce enolpyruvyl shikimate-3-phosphate and inorganic phosphate. In Serratia proteamaculans (strain 568), this protein is 3-phosphoshikimate 1-carboxyvinyltransferase.